The following is a 204-amino-acid chain: Transmembrane protein 253 (204 aa).

The next 4 helical transmembrane spans lie at 33–53, 62–82, 96–116, and 138–158; these read LVLA…TISV, LVTA…IITL, MMIS…IEVM, and LSAE…LFLL. Positions 184 to 204 are disordered; it reads EEVSGLENGPVVASTGNRTDE.

The protein localises to the membrane. This is Transmembrane protein 253 (Tmem253) from Mus musculus (Mouse).